The primary structure comprises 1588 residues: Pentafunctional AROM polypeptide (1588 aa).

Residues 1 to 392 are 3-dehydroquinate synthase; sequence MVQLAKVPIL…YGDSAQFVSD (392 aa). Residues 43–45, 78–81, 109–111, and D114 contribute to the NAD(+) site; these read DTN, ETSK, and GGV. R125 contacts 7-phospho-2-dehydro-3-deoxy-D-arabino-heptonate. Residue 134-135 participates in NAD(+) binding; it reads TS. The 7-phospho-2-dehydro-3-deoxy-D-arabino-heptonate site is built by D141 and K147. Position 156 (K156) interacts with NAD(+). Residue N157 participates in 7-phospho-2-dehydro-3-deoxy-D-arabino-heptonate binding. NAD(+) is bound by residues 174 to 177 and N185; that span reads WLET. E189 contacts Zn(2+). 7-phospho-2-dehydro-3-deoxy-D-arabino-heptonate contacts are provided by residues 189–192 and K258; that span reads EVIK. Catalysis depends on E268, which acts as the Proton acceptor; for 3-dehydroquinate synthase activity. 7-phospho-2-dehydro-3-deoxy-D-arabino-heptonate contacts are provided by residues 272 to 276 and H279; that span reads RNLLN. A Zn(2+)-binding site is contributed by H279. Residue H283 is the Proton acceptor; for 3-dehydroquinate synthase activity of the active site. Residues H295 and K364 each contribute to the 7-phospho-2-dehydro-3-deoxy-D-arabino-heptonate site. A Zn(2+)-binding site is contributed by H295. The interval 405–871 is EPSP synthase; it reads VYPFKDIPAD…WDVLHSELGA (467 aa). The active-site For EPSP synthase activity is C853. A shikimate kinase region spans residues 890 to 1080; sequence SVVIIGMRAA…IPSGRSAFVC (191 aa). An ATP-binding site is contributed by 895 to 902; it reads GMRAAGKT. Residues 1081–1293 are 3-dehydroquinase; sequence LTFDDLTEQT…AAPGQLTVAQ (213 aa). H1198 serves as the catalytic Proton acceptor; for 3-dehydroquinate dehydratase activity. K1227 serves as the catalytic Schiff-base intermediate with substrate; for 3-dehydroquinate dehydratase activity. The interval 1306–1588 is shikimate dehydrogenase; the sequence is PKELFVVGKP…KAIFDAVTKE (283 aa).

This sequence in the N-terminal section; belongs to the sugar phosphate cyclases superfamily. Dehydroquinate synthase family. The protein in the 2nd section; belongs to the EPSP synthase family. In the 3rd section; belongs to the shikimate kinase family. It in the 4th section; belongs to the type-I 3-dehydroquinase family. This sequence in the C-terminal section; belongs to the shikimate dehydrogenase family. In terms of assembly, homodimer. Zn(2+) serves as cofactor.

It is found in the cytoplasm. The catalysed reaction is 7-phospho-2-dehydro-3-deoxy-D-arabino-heptonate = 3-dehydroquinate + phosphate. It catalyses the reaction 3-dehydroquinate = 3-dehydroshikimate + H2O. It carries out the reaction shikimate + NADP(+) = 3-dehydroshikimate + NADPH + H(+). The enzyme catalyses shikimate + ATP = 3-phosphoshikimate + ADP + H(+). The catalysed reaction is 3-phosphoshikimate + phosphoenolpyruvate = 5-O-(1-carboxyvinyl)-3-phosphoshikimate + phosphate. Its pathway is metabolic intermediate biosynthesis; chorismate biosynthesis; chorismate from D-erythrose 4-phosphate and phosphoenolpyruvate: step 2/7. It functions in the pathway metabolic intermediate biosynthesis; chorismate biosynthesis; chorismate from D-erythrose 4-phosphate and phosphoenolpyruvate: step 3/7. The protein operates within metabolic intermediate biosynthesis; chorismate biosynthesis; chorismate from D-erythrose 4-phosphate and phosphoenolpyruvate: step 4/7. It participates in metabolic intermediate biosynthesis; chorismate biosynthesis; chorismate from D-erythrose 4-phosphate and phosphoenolpyruvate: step 5/7. Its pathway is metabolic intermediate biosynthesis; chorismate biosynthesis; chorismate from D-erythrose 4-phosphate and phosphoenolpyruvate: step 6/7. The AROM polypeptide catalyzes 5 consecutive enzymatic reactions in prechorismate polyaromatic amino acid biosynthesis. In Saccharomyces cerevisiae (strain RM11-1a) (Baker's yeast), this protein is Pentafunctional AROM polypeptide.